Consider the following 219-residue polypeptide: Large ribosomal subunit protein uL3 (219 aa).

Residues 140–163 (SASHGAHRNHRKPGSIGASSTPSR) form a disordered region.

This sequence belongs to the universal ribosomal protein uL3 family. As to quaternary structure, part of the 50S ribosomal subunit. Forms a cluster with proteins L14 and L19.

In terms of biological role, one of the primary rRNA binding proteins, it binds directly near the 3'-end of the 23S rRNA, where it nucleates assembly of the 50S subunit. In Leifsonia xyli subsp. xyli (strain CTCB07), this protein is Large ribosomal subunit protein uL3.